Here is a 433-residue protein sequence, read N- to C-terminus: MTDFSPREIVSELDRFIVGQADAKRAVAIALRNRWRRLQLEGSLREEVLPKNILMIGPTGVGKTEIARRLAKLAGAPFLKVEATKFTEVGYVGRDVEQIIRDLVEVAIAQVREKKRKDVQARAQVAAEERVLDALVGPGSGPATRDSFRKKLRAGELNDKEIEIETQAGSGSPMFEIPGMPGAQIGAVSLGDIFGKMGGRTKKRRLTVADSHEILVNEEADKLLDTDQLVQEAIAAVENNGIVFLDEIDKICVRDGRSGGEVSREGVQRDLLPLIEGTTVSTKHGAVKTEHILFIASGAFHIAKPSDLLPELQGRLPIRVELNALSRDDMRRILTEPEASLIKQYVALMKTEGVTLDFSDDAIDALADVAVAVNSTVENIGARRLQTVMERVLDEISFVAPDRHGETFQVDADYVKTNVGDLAKNTDLSRFIL.

ATP-binding positions include valine 18, 60 to 65, aspartate 246, glutamate 311, and arginine 383; that span reads GVGKTE.

This sequence belongs to the ClpX chaperone family. HslU subfamily. In terms of assembly, a double ring-shaped homohexamer of HslV is capped on each side by a ring-shaped HslU homohexamer. The assembly of the HslU/HslV complex is dependent on binding of ATP.

The protein localises to the cytoplasm. Functionally, ATPase subunit of a proteasome-like degradation complex; this subunit has chaperone activity. The binding of ATP and its subsequent hydrolysis by HslU are essential for unfolding of protein substrates subsequently hydrolyzed by HslV. HslU recognizes the N-terminal part of its protein substrates and unfolds these before they are guided to HslV for hydrolysis. This Rhodopseudomonas palustris (strain TIE-1) protein is ATP-dependent protease ATPase subunit HslU.